The following is a 193-amino-acid chain: Rho-related GTP-binding protein RhoA-B (193 aa).

Residues 12–19, 30–37, 59–63, 117–120, and 160–162 each bind GTP; these read GDGACGKT, FPEVYVPT, DTAGQ, NKKD, and SAK. A glycan ((Microbial infection) O-linked (GlcNAc) tyrosine; by Yersinia Afp18) is linked at tyrosine 34. Position 190 is a cysteine methyl ester (cysteine 190). A lipid anchor (S-geranylgeranyl cysteine) is attached at cysteine 190. Positions 191-193 are cleaved as a propeptide — removed in mature form; that stretch reads CLL.

It belongs to the small GTPase superfamily. Rho family. Post-translationally, (Microbial infection) Glycosylated at Tyr-34 by Yersinia ruckeri toxin Afp18. Mono-O-GlcNAcylation by Afp18 inhibits RhoA activation by guanine nucleotide exchange factors and blocks RhoA signaling.

The protein resides in the cell membrane. In terms of biological role, regulates a signal transduction pathway linking plasma membrane receptors to the assembly of focal adhesions and actin stress fibers. This is Rho-related GTP-binding protein RhoA-B from Danio rerio (Zebrafish).